We begin with the raw amino-acid sequence, 156 residues long: Cyanate hydratase (156 aa).

Residues R96, E99, and S122 contribute to the active site.

This sequence belongs to the cyanase family.

It carries out the reaction cyanate + hydrogencarbonate + 3 H(+) = NH4(+) + 2 CO2. Functionally, catalyzes the reaction of cyanate with bicarbonate to produce ammonia and carbon dioxide. This chain is Cyanate hydratase, found in Pseudomonas aeruginosa (strain LESB58).